The sequence spans 127 residues: C-C motif chemokine 28 (127 aa).

The N-terminal stretch at 1–19 is a signal peptide; that stretch reads MQQRGLAIVALAVCAALHA. Cystine bridges form between C30–C58 and C31–C73. N78 is a glycosylation site (N-linked (GlcNAc...) asparagine). Basic residues predominate over residues 92–115; it reads KNGKGNVCHRKKHHGKRNSNRAHQ. Positions 92–127 are disordered; sequence KNGKGNVCHRKKHHGKRNSNRAHQGKHETYGHKTPY. The span at 116 to 127 shows a compositional bias: basic and acidic residues; it reads GKHETYGHKTPY.

This sequence belongs to the intercrine beta (chemokine CC) family. As to expression, preferentially expressed by epithelial cells of diverse tissues including normal and pathological colon, salivary gland, mammary gland, trachea and rectum. Also found in prostate, spleen, thyroid, psoriasis skin and in lower levels in peripheral blood leukocytes, small intestine, Peyer patches, stomach and normal skin.

It is found in the secreted. Functionally, chemotactic activity for resting CD4, CD8 T-cells and eosinophils. Binds to CCR3 and CCR10 and induces calcium mobilization in a dose-dependent manner. This Homo sapiens (Human) protein is C-C motif chemokine 28 (CCL28).